Consider the following 114-residue polypeptide: T cell receptor beta variable 4-2 (114 aa).

Positions 1–21 are cleaved as a signal peptide; it reads MGCRLLCCAVLCLLGAVPMET. One can recognise an Ig-like domain in the interval 22-114; it reads GVTQTPRHLV…SALYLCASSQ (93 aa). The cysteines at positions 42 and 110 are disulfide-linked. N-linked (GlcNAc...) asparagine glycosylation is found at N76 and N89.

In terms of assembly, alpha-beta TR is a heterodimer composed of an alpha and beta chain; disulfide-linked. The alpha-beta TR is associated with the transmembrane signaling CD3 coreceptor proteins to form the TR-CD3 (TcR or TCR). The assembly of alpha-beta TR heterodimers with CD3 occurs in the endoplasmic reticulum where a single alpha-beta TR heterodimer associates with one CD3D-CD3E heterodimer, one CD3G-CD3E heterodimer and one CD247 homodimer forming a stable octameric structure. CD3D-CD3E and CD3G-CD3E heterodimers preferentially associate with TR alpha and TR beta chains, respectively. The association of the CD247 homodimer is the last step of TcR assembly in the endoplasmic reticulum and is required for transport to the cell surface.

It is found in the cell membrane. V region of the variable domain of T cell receptor (TR) beta chain that participates in the antigen recognition. Alpha-beta T cell receptors are antigen specific receptors which are essential to the immune response and are present on the cell surface of T lymphocytes. Recognize peptide-major histocompatibility (MH) (pMH) complexes that are displayed by antigen presenting cells (APC), a prerequisite for efficient T cell adaptive immunity against pathogens. Binding of alpha-beta TR to pMH complex initiates TR-CD3 clustering on the cell surface and intracellular activation of LCK that phosphorylates the ITAM motifs of CD3G, CD3D, CD3E and CD247 enabling the recruitment of ZAP70. In turn ZAP70 phosphorylates LAT, which recruits numerous signaling molecules to form the LAT signalosome. The LAT signalosome propagates signal branching to three major signaling pathways, the calcium, the mitogen-activated protein kinase (MAPK) kinase and the nuclear factor NF-kappa-B (NF-kB) pathways, leading to the mobilization of transcription factors that are critical for gene expression and essential for T cell growth and differentiation. The T cell repertoire is generated in the thymus, by V-(D)-J rearrangement. This repertoire is then shaped by intrathymic selection events to generate a peripheral T cell pool of self-MH restricted, non-autoaggressive T cells. Post-thymic interaction of alpha-beta TR with the pMH complexes shapes TR structural and functional avidity. This chain is T cell receptor beta variable 4-2, found in Homo sapiens (Human).